The primary structure comprises 187 residues: Proenkephalin-A (187 aa).

4 consecutive propeptides follow at residues 52-70 (MDELYPQEPEEEAPAEILA), 80-143 (DAEE…KMLQ), 153-163 (VGRPEWWMDYQ), and 173-187 (FADSLPSDEEGESYS). Residues 81 to 132 (AEEEEDALASSSDLLKELLGPGETETAAAPRGRDDEDVSKSHGGFMRALKGS) are disordered. Low complexity predominate over residues 88–99 (LASSSDLLKELL). Basic and acidic residues predominate over residues 111–120 (RGRDDEDVSK). Ser187 bears the Phosphoserine mark.

It belongs to the opioid neuropeptide precursor family. Post-translationally, processed and degraded by ACE. The N-terminal domain contains 6 conserved cysteines thought to be involved in disulfide bonding and/or processing. In terms of processing, proenkephalin-A is cleaved by CTSL to generate Met-enkephalin.

The protein localises to the cytoplasmic vesicle. It localises to the secretory vesicle. The protein resides in the chromaffin granule lumen. Its subcellular location is the secreted. In terms of biological role, neuropeptide that competes with and mimic the effects of opiate drugs. They play a role in a number of physiologic functions, including pain perception and responses to stress. This is Proenkephalin-A (PENK) from Felis catus (Cat).